The following is a 193-amino-acid chain: dTTP/UTP pyrophosphatase (193 aa).

The active-site Proton acceptor is Asp77.

Belongs to the Maf family. YhdE subfamily. It depends on a divalent metal cation as a cofactor.

It is found in the cytoplasm. It carries out the reaction dTTP + H2O = dTMP + diphosphate + H(+). It catalyses the reaction UTP + H2O = UMP + diphosphate + H(+). Functionally, nucleoside triphosphate pyrophosphatase that hydrolyzes dTTP and UTP. May have a dual role in cell division arrest and in preventing the incorporation of modified nucleotides into cellular nucleic acids. The protein is dTTP/UTP pyrophosphatase of Bacteroides thetaiotaomicron (strain ATCC 29148 / DSM 2079 / JCM 5827 / CCUG 10774 / NCTC 10582 / VPI-5482 / E50).